A 275-amino-acid chain; its full sequence is MSLVLAVYGKGGIGKSTTSANISAALALKGAKVLQIGCDPKHDSTFPITGKLQKTVIEALEEVDFHHEELSAEDIIETGFAGIDCLEAGGPPAGSGCGGYVVGESVALLQELGLYDKYDVILFDVLGDVVCGGFSAPLNYADYAIIIATNDFDSIFAANRLCMAIQQKSVRYKVKLAGIVANRVDYVTGGGTNMLDQFAEKVGTKLLAKVPYHELIRKSRFAGKTMYAMEDTPDKEECLKPYNEIADFLIQESPIASVPVPIGDREIFKMVNGWQ.

Residues 12–17 (GIGKST) and Lys41 each bind ATP. Ser16 provides a ligand contact to Mg(2+). [4Fe-4S] cluster is bound by residues Cys97 and Cys131. An ATP-binding site is contributed by 182–183 (NR).

It belongs to the NifH/BchL/ChlL family. As to quaternary structure, homodimer. Protochlorophyllide reductase is composed of three subunits; BchL, BchN and BchB. [4Fe-4S] cluster serves as cofactor.

The enzyme catalyses chlorophyllide a + oxidized 2[4Fe-4S]-[ferredoxin] + 2 ADP + 2 phosphate = protochlorophyllide a + reduced 2[4Fe-4S]-[ferredoxin] + 2 ATP + 2 H2O. It functions in the pathway porphyrin-containing compound metabolism; bacteriochlorophyll biosynthesis (light-independent). Its function is as follows. Component of the dark-operative protochlorophyllide reductase (DPOR) that uses Mg-ATP and reduced ferredoxin to reduce ring D of protochlorophyllide (Pchlide) to form chlorophyllide a (Chlide). This reaction is light-independent. The L component serves as a unique electron donor to the NB-component of the complex, and binds Mg-ATP. The polypeptide is Light-independent protochlorophyllide reductase iron-sulfur ATP-binding protein (Pelodictyon phaeoclathratiforme (strain DSM 5477 / BU-1)).